A 385-amino-acid chain; its full sequence is MKKIILVAGGTGGHFFPAVALGEELIKRGYIVHFITDLRCKKYINKDMKIIFYLLDLKRFSNILLFLPTLLIAFLKSIKLIYHIKSCVIIGFGGYPVIAPMFAAIFLRIPIIIHEQNSYLGKVNKFFARFAKKIAISYEDIKNVPEFAKSKIVLTGGIVRKNIRELDSFIYLASQHCPTKLTKTVLTNTLNHFVKARNNKFSNCNIFTLFIFGGSQGAKLFSELIPASIEILMKKQPNLELKIIQQASLAHQVKIKDIYSKLNITYEFAEFFDNIALQYKVANLVISRAGASTIEELTYIGLPTIFIPLPSAADNHQYYNAKLLADNKAGWCLEQNNISAEKLADQILDLISNRQLLEDAAQNLLNRKQEGHLLLSNLIEDTVFL.

UDP-N-acetyl-alpha-D-glucosamine-binding positions include T11–G13, N117, R160, S215, and Q317.

Belongs to the glycosyltransferase 28 family. MurG subfamily.

The protein localises to the cell inner membrane. The catalysed reaction is di-trans,octa-cis-undecaprenyl diphospho-N-acetyl-alpha-D-muramoyl-L-alanyl-D-glutamyl-meso-2,6-diaminopimeloyl-D-alanyl-D-alanine + UDP-N-acetyl-alpha-D-glucosamine = di-trans,octa-cis-undecaprenyl diphospho-[N-acetyl-alpha-D-glucosaminyl-(1-&gt;4)]-N-acetyl-alpha-D-muramoyl-L-alanyl-D-glutamyl-meso-2,6-diaminopimeloyl-D-alanyl-D-alanine + UDP + H(+). The protein operates within cell wall biogenesis; peptidoglycan biosynthesis. In terms of biological role, cell wall formation. Catalyzes the transfer of a GlcNAc subunit on undecaprenyl-pyrophosphoryl-MurNAc-pentapeptide (lipid intermediate I) to form undecaprenyl-pyrophosphoryl-MurNAc-(pentapeptide)GlcNAc (lipid intermediate II). The chain is UDP-N-acetylglucosamine--N-acetylmuramyl-(pentapeptide) pyrophosphoryl-undecaprenol N-acetylglucosamine transferase from Rickettsia typhi (strain ATCC VR-144 / Wilmington).